Consider the following 102-residue polypeptide: NADH-quinone oxidoreductase subunit K (102 aa).

The next 3 membrane-spanning stretches (helical) occupy residues 6-26 (MEHG…GLMV), 30-50 (ILFI…AFVV), and 62-82 (VMFI…LAIL).

Belongs to the complex I subunit 4L family. In terms of assembly, NDH-1 is composed of 13 different subunits. Subunits NuoA, H, J, K, L, M, N constitute the membrane sector of the complex.

It is found in the cell inner membrane. The catalysed reaction is a quinone + NADH + 5 H(+)(in) = a quinol + NAD(+) + 4 H(+)(out). Its function is as follows. NDH-1 shuttles electrons from NADH, via FMN and iron-sulfur (Fe-S) centers, to quinones in the respiratory chain. The immediate electron acceptor for the enzyme in this species is believed to be ubiquinone. Couples the redox reaction to proton translocation (for every two electrons transferred, four hydrogen ions are translocated across the cytoplasmic membrane), and thus conserves the redox energy in a proton gradient. In Ectopseudomonas mendocina (strain ymp) (Pseudomonas mendocina), this protein is NADH-quinone oxidoreductase subunit K.